A 493-amino-acid polypeptide reads, in one-letter code: Glutamyl-tRNA(Gln) amidotransferase subunit A (493 aa).

Active-site charge relay system residues include Lys78 and Ser158. The active-site Acyl-ester intermediate is the Ser182.

Belongs to the amidase family. GatA subfamily. As to quaternary structure, heterotrimer of A, B and C subunits.

It catalyses the reaction L-glutamyl-tRNA(Gln) + L-glutamine + ATP + H2O = L-glutaminyl-tRNA(Gln) + L-glutamate + ADP + phosphate + H(+). In terms of biological role, allows the formation of correctly charged Gln-tRNA(Gln) through the transamidation of misacylated Glu-tRNA(Gln) in organisms which lack glutaminyl-tRNA synthetase. The reaction takes place in the presence of glutamine and ATP through an activated gamma-phospho-Glu-tRNA(Gln). The chain is Glutamyl-tRNA(Gln) amidotransferase subunit A from Methylocella silvestris (strain DSM 15510 / CIP 108128 / LMG 27833 / NCIMB 13906 / BL2).